The sequence spans 419 residues: Inositol-tetrakisphosphate 1-kinase (419 aa).

Residue K18 coordinates 1D-myo-inositol 1,3,4-trisphosphate. The ATP site is built by R106 and K157. An ATP-grasp domain is found at 117-325 (EAYMKDDRIC…IASVLQGQSS (209 aa)). 2 residues coordinate 1D-myo-inositol 1,3,4-trisphosphate: H167 and K199. Residues 188-199 (QNFINHNAVLYK), S214, S232, and S236 contribute to the ATP site. Mg(2+) contacts are provided by D281, D295, and N297. Position 297 (N297) interacts with 1D-myo-inositol 1,3,4-trisphosphate. K388 is modified (N6-acetyllysine; by EP300 and CREBBP). Phosphoserine is present on S401. Position 415 is an N6-acetyllysine; by EP300 and CREBBP (K415).

Belongs to the ITPK1 family. As to quaternary structure, monomer. Interacts with GPS1/COPS1. Mg(2+) serves as cofactor. Acetylation by EP300 and CREBBP destabilizes ITPK1, and down-regulates enzymatic activity. Deacetylated by SIRT1.

The catalysed reaction is 1D-myo-inositol 3,4,5,6-tetrakisphosphate + ATP = 1D-myo-inositol 1,3,4,5,6-pentakisphosphate + ADP + H(+). The enzyme catalyses 1D-myo-inositol 1,3,4-trisphosphate + ATP = 1D-myo-inositol 1,3,4,5-tetrakisphosphate + ADP + H(+). It carries out the reaction 1D-myo-inositol 1,3,4-trisphosphate + ATP = 1D-myo-inositol 1,3,4,6-tetrakisphosphate + ADP + H(+). It catalyses the reaction 1D-myo-inositol 3,4,6-trisphosphate + ATP = 1D-myo-inositol 1,3,4,6-tetrakisphosphate + ADP + H(+). The catalysed reaction is 1D-myo-inositol 1,3,4-trisphosphate + 1D-myo-inositol 1,3,4,5,6-pentakisphosphate = 1D-myo-inositol 3,4,5,6-tetrakisphosphate + 1D-myo-inositol 1,3,4,6-tetrakisphosphate. The enzyme catalyses 1D-myo-inositol 1,3,4-trisphosphate + 1D-myo-inositol 1,3,4,5,6-pentakisphosphate = 1D-myo-inositol 3,4,5,6-tetrakisphosphate + 1D-myo-inositol 1,3,4,5-tetrakisphosphate. Functionally, kinase that can phosphorylate various inositol polyphosphate such as Ins(3,4,5,6)P4 or Ins(1,3,4)P3. Phosphorylates Ins(3,4,5,6)P4 at position 1 to form Ins(1,3,4,5,6)P5. This reaction is thought to have regulatory importance, since Ins(3,4,5,6)P4 is an inhibitor of plasma membrane Ca(2+)-activated Cl(-) channels, while Ins(1,3,4,5,6)P5 is not. Also phosphorylates Ins(1,3,4)P3 on O-5 and O-6 to form Ins(1,3,4,6)P4, an essential molecule in the hexakisphosphate (InsP6) pathway. Also acts as an inositol polyphosphate phosphatase that dephosphorylates Ins(1,3,4,5)P4 and Ins(1,3,4,6)P4 to Ins(1,3,4)P3, and Ins(1,3,4,5,6)P5 to Ins(3,4,5,6)P4. May also act as an isomerase that interconverts the inositol tetrakisphosphate isomers Ins(1,3,4,5)P4 and Ins(1,3,4,6)P4 in the presence of ADP and magnesium. Probably acts as the rate-limiting enzyme of the InsP6 pathway. Modifies TNF-alpha-induced apoptosis by interfering with the activation of TNFRSF1A-associated death domain. Plays an important role in MLKL-mediated necroptosis. Produces highly phosphorylated inositol phosphates such as inositolhexakisphosphate (InsP6) which bind to MLKL mediating the release of an N-terminal auto-inhibitory region leading to its activation. Essential for activated phospho-MLKL to oligomerize and localize to the cell membrane during necroptosis. This is Inositol-tetrakisphosphate 1-kinase (ITPK1) from Bos taurus (Bovine).